The primary structure comprises 122 residues: Large ribosomal subunit protein bL12 (122 aa).

It belongs to the bacterial ribosomal protein bL12 family. In terms of assembly, homodimer. Part of the ribosomal stalk of the 50S ribosomal subunit. Forms a multimeric L10(L12)X complex, where L10 forms an elongated spine to which 2 to 4 L12 dimers bind in a sequential fashion. Binds GTP-bound translation factors.

Forms part of the ribosomal stalk which helps the ribosome interact with GTP-bound translation factors. Is thus essential for accurate translation. This chain is Large ribosomal subunit protein bL12, found in Vibrio vulnificus (strain CMCP6).